A 178-amino-acid polypeptide reads, in one-letter code: Lipid A deacylase PagL (178 aa).

A signal peptide spans 1-19 (MQFLKKNKPLFGIVTLALA). Catalysis depends on charge relay system residues His-154, Ser-156, and Asp-168.

It belongs to the PagL family. In terms of assembly, homodimer.

The protein resides in the cell outer membrane. The enzyme catalyses a 3-(acyloxy)acyl derivative of bacterial toxin + H2O = a 3-hydroxyacyl derivative of bacterial toxin + a fatty acid + H(+). In terms of biological role, has lipid A 3-O-deacylase activity. Hydrolyzes the ester bond at the 3 position of lipid A, a bioactive component of lipopolysaccharide (LPS), thereby releasing the primary fatty acyl moiety. In Bordetella bronchiseptica (strain ATCC BAA-588 / NCTC 13252 / RB50) (Alcaligenes bronchisepticus), this protein is Lipid A deacylase PagL.